Consider the following 124-residue polypeptide: uncharacterized protein (124 aa).

This is an uncharacterized protein from Haemophilus influenzae (strain ATCC 51907 / DSM 11121 / KW20 / Rd).